The sequence spans 311 residues: Phosphoribosylaminoimidazole-succinocarboxamide synthase (311 aa).

The protein belongs to the SAICAR synthetase family.

The enzyme catalyses 5-amino-1-(5-phospho-D-ribosyl)imidazole-4-carboxylate + L-aspartate + ATP = (2S)-2-[5-amino-1-(5-phospho-beta-D-ribosyl)imidazole-4-carboxamido]succinate + ADP + phosphate + 2 H(+). It functions in the pathway purine metabolism; IMP biosynthesis via de novo pathway; 5-amino-1-(5-phospho-D-ribosyl)imidazole-4-carboxamide from 5-amino-1-(5-phospho-D-ribosyl)imidazole-4-carboxylate: step 1/2. This is Phosphoribosylaminoimidazole-succinocarboxamide synthase from Azoarcus sp. (strain BH72).